A 236-amino-acid chain; its full sequence is Phosphoribosylaminoimidazole-succinocarboxamide synthase (236 aa).

The protein belongs to the SAICAR synthetase family.

It catalyses the reaction 5-amino-1-(5-phospho-D-ribosyl)imidazole-4-carboxylate + L-aspartate + ATP = (2S)-2-[5-amino-1-(5-phospho-beta-D-ribosyl)imidazole-4-carboxamido]succinate + ADP + phosphate + 2 H(+). It functions in the pathway purine metabolism; IMP biosynthesis via de novo pathway; 5-amino-1-(5-phospho-D-ribosyl)imidazole-4-carboxamide from 5-amino-1-(5-phospho-D-ribosyl)imidazole-4-carboxylate: step 1/2. The polypeptide is Phosphoribosylaminoimidazole-succinocarboxamide synthase (Campylobacter concisus (strain 13826)).